The sequence spans 233 residues: Probable dihydroorotate dehydrogenase B (NAD(+)), electron transfer subunit (233 aa).

One can recognise an FAD-binding FR-type domain in the interval 1 to 87; sequence MYRVVTIEEV…RGPYGHGFIK (87 aa). [2Fe-2S] cluster is bound by residues cysteine 202, cysteine 207, cysteine 210, and cysteine 218.

It belongs to the PyrK family. In terms of assembly, heterotetramer of 2 PyrK and 2 PyrD type B subunits. [2Fe-2S] cluster is required as a cofactor. The cofactor is FAD.

The protein operates within pyrimidine metabolism; UMP biosynthesis via de novo pathway; orotate from (S)-dihydroorotate (NAD(+) route): step 1/1. Its function is as follows. Responsible for channeling the electrons from the oxidation of dihydroorotate from the FMN redox center in the PyrD type B subunit to the ultimate electron acceptor NAD(+). The protein is Probable dihydroorotate dehydrogenase B (NAD(+)), electron transfer subunit of Thermococcus kodakarensis (strain ATCC BAA-918 / JCM 12380 / KOD1) (Pyrococcus kodakaraensis (strain KOD1)).